Here is a 240-residue protein sequence, read N- to C-terminus: ATP-dependent dethiobiotin synthetase BioD (240 aa).

13 to 18 is a binding site for ATP; the sequence is GVGKTI. Thr-17 is a binding site for Mg(2+). Residue Lys-38 is part of the active site. Thr-42 is a binding site for substrate. ATP is bound by residues Asp-55, 116–119, and 214–216; these read EGVG and PYL. The Mg(2+) site is built by Asp-55 and Glu-116.

Belongs to the dethiobiotin synthetase family. As to quaternary structure, homodimer. It depends on Mg(2+) as a cofactor.

It is found in the cytoplasm. The catalysed reaction is (7R,8S)-7,8-diammoniononanoate + CO2 + ATP = (4R,5S)-dethiobiotin + ADP + phosphate + 3 H(+). It functions in the pathway cofactor biosynthesis; biotin biosynthesis; biotin from 7,8-diaminononanoate: step 1/2. Catalyzes a mechanistically unusual reaction, the ATP-dependent insertion of CO2 between the N7 and N8 nitrogen atoms of 7,8-diaminopelargonic acid (DAPA, also called 7,8-diammoniononanoate) to form a ureido ring. The polypeptide is ATP-dependent dethiobiotin synthetase BioD (Thermodesulfovibrio yellowstonii (strain ATCC 51303 / DSM 11347 / YP87)).